Consider the following 291-residue polypeptide: 33 kDa chaperonin (291 aa).

2 disulfide bridges follow: C235-C237 and C268-C271.

It belongs to the HSP33 family. Under oxidizing conditions two disulfide bonds are formed involving the reactive cysteines. Under reducing conditions zinc is bound to the reactive cysteines and the protein is inactive.

The protein localises to the cytoplasm. In terms of biological role, redox regulated molecular chaperone. Protects both thermally unfolding and oxidatively damaged proteins from irreversible aggregation. Plays an important role in the bacterial defense system toward oxidative stress. This is 33 kDa chaperonin from Streptococcus agalactiae serotype Ia (strain ATCC 27591 / A909 / CDC SS700).